A 131-amino-acid polypeptide reads, in one-letter code: Small ribosomal subunit protein uS19 (131 aa).

It belongs to the universal ribosomal protein uS19 family.

Functionally, protein S19 forms a complex with S13 that binds strongly to the 16S ribosomal RNA. This Nitrosopumilus maritimus (strain SCM1) protein is Small ribosomal subunit protein uS19.